The primary structure comprises 578 residues: Putative transporter B0361.11 (578 aa).

The disordered stretch occupies residues 1 to 30 (MSISRRSYEQFDEMKSENQENNSKKKSSER). The next 11 helical transmembrane spans lie at 51 to 71 (IFTY…MYIM), 148 to 168 (FGLT…SMLA), 182 to 202 (ILAF…IFLI), 232 to 252 (AWIT…TLLV), 263 to 283 (YFIV…LPES), 339 to 359 (IWLL…YFAI), 373 to 393 (AFLY…PLMM), 399 to 419 (MIVI…TVFL), 426 to 446 (LVIM…HPIW), 457 to 477 (SLCF…SPYV), and 486 to 506 (WIPF…AFML). The span at 532-550 (AYRRSKSSSSSVSALSKTS) shows a compositional bias: low complexity. The disordered stretch occupies residues 532–561 (AYRRSKSSSSSVSALSKTSVRSKKTLSSES).

It belongs to the major facilitator superfamily. Sugar transporter (TC 2.A.1.1) family.

Its subcellular location is the membrane. The sequence is that of Putative transporter B0361.11 from Caenorhabditis elegans.